The primary structure comprises 210 residues: Thymidylate kinase (210 aa).

Residue 10 to 17 participates in ATP binding; sequence GPEGAGKS.

It belongs to the thymidylate kinase family.

The enzyme catalyses dTMP + ATP = dTDP + ADP. In terms of biological role, phosphorylation of dTMP to form dTDP in both de novo and salvage pathways of dTTP synthesis. This chain is Thymidylate kinase, found in Pseudomonas aeruginosa (strain UCBPP-PA14).